The sequence spans 241 residues: C-type lectin domain family 9 member A (241 aa).

At 1–34 (MHEEEIYTSLQWDIPTSEASQKCPSLSKCPGTWC) the chain is on the cytoplasmic side. An ITAM-like motif is present at residues 5 to 10 (EIYTSL). The chain crosses the membrane as a helical; Signal-anchor for type II membrane protein span at residues 35–55 (IVTVISCVVCVGLLAASIFLG). Residues 56 to 241 (IKFSQVSSLV…CEKKAFGSCI (186 aa)) are Extracellular-facing. N-linked (GlcNAc...) asparagine glycans are attached at residues Asn81 and Asn88. An intrachain disulfide couples Cys113 to Cys124. Residues 120 to 233 (NGKSCYYAFD…CSNWKYFICE (114 aa)) enclose the C-type lectin domain. Residues Asn135, Asn161, and Asn223 are each glycosylated (N-linked (GlcNAc...) asparagine). 2 disulfides stabilise this stretch: Cys141/Cys232 and Cys211/Cys224.

As to quaternary structure, homodimer. In terms of processing, N-glycosylated. In terms of tissue distribution, high expression in the spleen, moderate to low levels in several other tissues and cell types, but no detectable expression in skin dendritic cells or CD4(+) T-cells.

It is found in the membrane. Functions as an endocytic receptor on a small subset of myeloid cells specialized for the uptake and processing of material from dead cells. Recognizes filamentous form of actin in association with particular actin-binding domains of cytoskeletal proteins, including spectrin, exposed when cell membranes are damaged, and mediate the cross-presentation of dead-cell associated antigens in a Syk-dependent manner. This Rattus norvegicus (Rat) protein is C-type lectin domain family 9 member A (Clec9a).